The following is a 634-amino-acid chain: Threonine--tRNA ligase (634 aa).

The TGS domain occupies 1-61 (MINIRFPDGS…NSNCELRLIT (61 aa)). The catalytic stretch occupies residues 241–532 (DHRKIGKVLD…LIEHYAGNLP (292 aa)). Residues Cys332, His383, and His509 each contribute to the Zn(2+) site.

This sequence belongs to the class-II aminoacyl-tRNA synthetase family. In terms of assembly, homodimer. Zn(2+) is required as a cofactor.

Its subcellular location is the cytoplasm. It carries out the reaction tRNA(Thr) + L-threonine + ATP = L-threonyl-tRNA(Thr) + AMP + diphosphate + H(+). Catalyzes the attachment of threonine to tRNA(Thr) in a two-step reaction: L-threonine is first activated by ATP to form Thr-AMP and then transferred to the acceptor end of tRNA(Thr). Also edits incorrectly charged L-seryl-tRNA(Thr). The polypeptide is Threonine--tRNA ligase (Francisella tularensis subsp. tularensis (strain WY96-3418)).